A 452-amino-acid chain; its full sequence is Glutathione gamma-glutamylcysteinyltransferase 2 (452 aa).

One can recognise a Peptidase C83 domain in the interval 1-220 (MSMASLYRRS…GFMLISRPHR (220 aa)). Positions 287 to 315 (EDVNQNLSSEEKSRLKLKQELLKQVQETK) form a coiled coil.

This sequence belongs to the phytochelatin synthase family. In terms of tissue distribution, expressed in shoots, roots, leaves, stems and flowers.

The catalysed reaction is [Glu(-Cys)](n)-Gly + glutathione + H(+) = [Glu(-Cys)](n+1)-Gly + glycine. Requires cadmium for activity. Also activated in heterologous system by AsO(4)(3-) ions, but not by Cu(2+), Zn(2+), Mn(2+) or Ni(2+) ions. Functionally, involved in the synthesis of phytochelatins (PC) and homophytochelatins (hPC), the heavy-metal-binding peptides of plants. This Arabidopsis thaliana (Mouse-ear cress) protein is Glutathione gamma-glutamylcysteinyltransferase 2 (PCS2).